The primary structure comprises 198 residues: Molybdenum cofactor guanylyltransferase (198 aa).

GTP is bound by residues 14–16, lysine 27, aspartate 73, and aspartate 103; that span reads LAG. Aspartate 103 contributes to the Mg(2+) binding site.

It belongs to the MobA family. As to quaternary structure, monomer. It depends on Mg(2+) as a cofactor.

The protein resides in the cytoplasm. It carries out the reaction Mo-molybdopterin + GTP + H(+) = Mo-molybdopterin guanine dinucleotide + diphosphate. In terms of biological role, transfers a GMP moiety from GTP to Mo-molybdopterin (Mo-MPT) cofactor (Moco or molybdenum cofactor) to form Mo-molybdopterin guanine dinucleotide (Mo-MGD) cofactor. This is Molybdenum cofactor guanylyltransferase from Pseudomonas paraeruginosa (strain DSM 24068 / PA7) (Pseudomonas aeruginosa (strain PA7)).